The primary structure comprises 232 residues: Large ribosomal subunit protein uL1 (232 aa).

It belongs to the universal ribosomal protein uL1 family. In terms of assembly, part of the 50S ribosomal subunit.

Functionally, binds directly to 23S rRNA. The L1 stalk is quite mobile in the ribosome, and is involved in E site tRNA release. Its function is as follows. Protein L1 is also a translational repressor protein, it controls the translation of the L11 operon by binding to its mRNA. This chain is Large ribosomal subunit protein uL1, found in Paraburkholderia phymatum (strain DSM 17167 / CIP 108236 / LMG 21445 / STM815) (Burkholderia phymatum).